The chain runs to 316 residues: Malate dehydrogenase (316 aa).

NAD(+)-binding positions include 12–17 (GAGNIG) and Asp-36. Arg-85 and Arg-91 together coordinate substrate. NAD(+)-binding positions include Asn-98 and 121 to 123 (VTN). 2 residues coordinate substrate: Asn-123 and Arg-154. The Proton acceptor role is filled by His-178.

This sequence belongs to the LDH/MDH superfamily. MDH type 3 family.

It catalyses the reaction (S)-malate + NAD(+) = oxaloacetate + NADH + H(+). Its function is as follows. Catalyzes the reversible oxidation of malate to oxaloacetate. In Wolbachia sp. subsp. Brugia malayi (strain TRS), this protein is Malate dehydrogenase.